Here is a 381-residue protein sequence, read N- to C-terminus: MYLSRFKQSGFRNLAPLNLEFDPHVNVFLGENAQGKTNLLEAIYFLAISRSHRTSNDREMIAFGQDFASLAGRVHKRQLDLDLRIVISKKGKSAWVNRVEQARLSKYVGHLNAILFSPEDMELVKGAPSLRRRFMDLEFGQINPEYLYFASQYRQLLQQRNNYLKQLARRQASDQVLLGVLTEQVATAASELIWRRYRYLADLNRYAAEAYRAISGQREELRVLYRPSAKEITAADQPAQIKQKLLDRFAEIADDELRRATTQLGPHRDDLEFQLDGKNAHLFASQGQQRTIALSLKLSEIQLIKQLTGEEPILLLDDVMSELDQNRQAALLNFIHGQTQTFITTTDLDSISQEIVKQPRIFYIHSGQIIEKEEGLNGRRR.

30-37 lines the ATP pocket; it reads GENAQGKT.

It belongs to the RecF family.

Its subcellular location is the cytoplasm. Its function is as follows. The RecF protein is involved in DNA metabolism; it is required for DNA replication and normal SOS inducibility. RecF binds preferentially to single-stranded, linear DNA. It also seems to bind ATP. This is DNA replication and repair protein RecF from Lactobacillus delbrueckii subsp. bulgaricus (strain ATCC BAA-365 / Lb-18).